Here is a 312-residue protein sequence, read N- to C-terminus: Zinc transporter ZitB (312 aa).

Helical transmembrane passes span 21–41 (LLFAFIVTAGFMLLEVVGGIL), 48–68 (LADAGHMLTDAAALLFALLVV), 90–110 (AAFVNAIALVVITLLIVWEAI), 123–143 (LMMVIAVAGLLANLFAFWILH), and 164–184 (LLGSVGAIVAALIIIWTGWTP).

It belongs to the cation diffusion facilitator (CDF) transporter (TC 2.A.4) family. SLC30A subfamily.

It is found in the cell inner membrane. In terms of biological role, involved in zinc efflux across the cytoplasmic membrane, thus reducing zinc accumulation in the cytoplasm and rendering bacteria more resistant to zinc. It may contribute to zinc homeostasis at low concentrations of zinc. The polypeptide is Zinc transporter ZitB (Salmonella typhi).